A 435-amino-acid polypeptide reads, in one-letter code: 3-ketoacyl-CoA thiolase (435 aa).

Cysteine 98 (acyl-thioester intermediate) is an active-site residue. Active-site proton acceptor residues include histidine 391 and cysteine 421.

Belongs to the thiolase-like superfamily. Thiolase family. In terms of assembly, heterotetramer of two alpha chains (FadJ) and two beta chains (FadI).

It is found in the cytoplasm. It carries out the reaction an acyl-CoA + acetyl-CoA = a 3-oxoacyl-CoA + CoA. The protein operates within lipid metabolism; fatty acid beta-oxidation. Its function is as follows. Catalyzes the final step of fatty acid oxidation in which acetyl-CoA is released and the CoA ester of a fatty acid two carbons shorter is formed. The protein is 3-ketoacyl-CoA thiolase of Colwellia psychrerythraea (strain 34H / ATCC BAA-681) (Vibrio psychroerythus).